The chain runs to 91 residues: Tachykinin-like peptide (91 aa).

The N-terminal stretch at 1–19 (MKILVAFAVIMLVSAQVLA) is a signal peptide. A propeptide spanning residues 20–51 (AEIGLNDEPEWYSDQIQEDLPVFENFLQRIAR) is cleaved from the precursor. M62 carries the post-translational modification Methionine amide. The interval 64–91 (KRNNGFGQMSRKRSAERNTIHNYERRRK) is disordered. A propeptide spanning residues 66–91 (NNGFGQMSRKRSAERNTIHNYERRRK) is cleaved from the precursor. The span at 76–91 (RSAERNTIHNYERRRK) shows a compositional bias: basic and acidic residues.

Expressed by the skin glands.

It localises to the secreted. Tachykinins are active peptides which excite neurons, evoke behavioral responses, are potent vasodilators and secretagogues, and contract (directly or indirectly) many smooth muscles. In vitro, induces contraction of guinea pig ileum smooth muscle in a dose-dependent manner. In Theloderma corticale (Kwangsi warty tree frog), this protein is Tachykinin-like peptide.